Here is a 270-residue protein sequence, read N- to C-terminus: tRNA pseudouridine synthase A (270 aa).

The Nucleophile role is filled by D51. Y109 is a substrate binding site.

Belongs to the tRNA pseudouridine synthase TruA family. Homodimer.

It carries out the reaction uridine(38/39/40) in tRNA = pseudouridine(38/39/40) in tRNA. Formation of pseudouridine at positions 38, 39 and 40 in the anticodon stem and loop of transfer RNAs. In Burkholderia ambifaria (strain ATCC BAA-244 / DSM 16087 / CCUG 44356 / LMG 19182 / AMMD) (Burkholderia cepacia (strain AMMD)), this protein is tRNA pseudouridine synthase A.